Consider the following 379-residue polypeptide: SUN domain-containing protein 5 (379 aa).

A disordered region spans residues Met-1–Met-45. Over Met-1–Thr-105 the chain is Nuclear. Over residues Gly-31 to Met-45 the composition is skewed to polar residues. The chain crosses the membrane as a helical span at residues Gly-106–Leu-122. The Perinuclear space segment spans residues Pro-123–Asp-379. Residues Leu-141–Ala-182 adopt a coiled-coil conformation. In terms of domain architecture, SUN spans Gly-205–Ala-364.

As to quaternary structure, probable homotrimer. Interacts with DNAJB13. In terms of processing, highly glycosylated in the Golgi apparatus during spermiogenesis. In terms of tissue distribution, sperm (at protein level). Widely expressed. Conflictingly shown to be specifically expressed in testis.

It is found in the nucleus inner membrane. The protein localises to the golgi apparatus. Functionally, plays an essential role in anchoring sperm head to the tail. Is responsible for the attachment of the coupling apparatus to the sperm nuclear envelope. This chain is SUN domain-containing protein 5 (SUN5), found in Homo sapiens (Human).